Here is a 429-residue protein sequence, read N- to C-terminus: Septin-8 (429 aa).

The segment covering M1–P16 has biased composition (basic and acidic residues). A disordered region spans residues M1–G23. At A2 the chain carries N-acetylalanine. S10 bears the Phosphoserine mark. The region spanning Q41–E307 is the Septin-type G domain. A G1 motif region spans residues G51–S58. GTP is bound by residues G51–S58, G106, K187–E195, G241, and R256. A G3 motif region spans residues D103 to G106. A G4 motif region spans residues A186–D189. Residues F320–A412 are a coiled coil. Polar residues predominate over residues Q409–P420. Residues Q409–N429 are disordered.

The protein belongs to the TRAFAC class TrmE-Era-EngA-EngB-Septin-like GTPase superfamily. Septin GTPase family. As to quaternary structure, septins polymerize into heterooligomeric protein complexes that form filaments, and can associate with cellular membranes, actin filaments and microtubules. GTPase activity is required for filament formation. Interacts with SEPTIN5. Interacts with CDK14, SEPTIN4 and SEPTIN7. Interacts with VAMP2; the interaction inhibits interaction of VAMP2 with SYP. Interacts with STX1A.

Its subcellular location is the cytoplasm. It localises to the cytoskeleton. The protein resides in the synapse. The protein localises to the cell projection. It is found in the axon. Its subcellular location is the cytoplasmic vesicle. It localises to the secretory vesicle. The protein resides in the synaptic vesicle membrane. The protein localises to the presynapse. Filament-forming cytoskeletal GTPase. May play a role in platelet secretion. Seems to participate in the process of SNARE complex formation in synaptic vesicles. This chain is Septin-8, found in Mus musculus (Mouse).